The sequence spans 152 residues: Large ribosomal subunit protein bL17 (152 aa).

Residues 121–140 are disordered; the sequence is APSASQKTGKQDRAKRVKGS.

This sequence belongs to the bacterial ribosomal protein bL17 family. Part of the 50S ribosomal subunit. Contacts protein L32.

In Pelodictyon phaeoclathratiforme (strain DSM 5477 / BU-1), this protein is Large ribosomal subunit protein bL17.